Here is a 200-residue protein sequence, read N- to C-terminus: Small ribosomal subunit protein uS4 (200 aa).

The disordered stretch occupies residues 22–42 (TGKELQKRPYPPGQHGPGQRR). The S4 RNA-binding domain maps to 92 to 152 (SRLDNLVYRL…EKSRNLQVIK (61 aa)).

This sequence belongs to the universal ribosomal protein uS4 family. In terms of assembly, part of the 30S ribosomal subunit. Contacts protein S5. The interaction surface between S4 and S5 is involved in control of translational fidelity.

Its function is as follows. One of the primary rRNA binding proteins, it binds directly to 16S rRNA where it nucleates assembly of the body of the 30S subunit. With S5 and S12 plays an important role in translational accuracy. This chain is Small ribosomal subunit protein uS4 (rpsD), found in Geobacillus stearothermophilus (Bacillus stearothermophilus).